The following is a 280-amino-acid chain: Tryptophan 2,3-dioxygenase (280 aa).

Residues 49-53 (FIIIH), Tyr111, and Arg115 contribute to the substrate site. Position 238 (His238) interacts with heme. Residue Thr252 participates in substrate binding.

Belongs to the tryptophan 2,3-dioxygenase family. As to quaternary structure, homotetramer. Heme serves as cofactor.

The catalysed reaction is L-tryptophan + O2 = N-formyl-L-kynurenine. It functions in the pathway amino-acid degradation; L-tryptophan degradation via kynurenine pathway; L-kynurenine from L-tryptophan: step 1/2. Its function is as follows. Heme-dependent dioxygenase that catalyzes the oxidative cleavage of the L-tryptophan (L-Trp) pyrrole ring and converts L-tryptophan to N-formyl-L-kynurenine. Catalyzes the oxidative cleavage of the indole moiety. In Geobacillus thermodenitrificans (strain NG80-2), this protein is Tryptophan 2,3-dioxygenase.